The following is a 329-amino-acid chain: Malate dehydrogenase (329 aa).

12-18 (GAAGQIG) is a binding site for NAD(+). Residues Arg-93 and Arg-99 each coordinate substrate. Residues Asn-106, Gln-113, and 130–132 (VGN) each bind NAD(+). Substrate is bound by residues Asn-132 and Arg-163. His-188 serves as the catalytic Proton acceptor.

Belongs to the LDH/MDH superfamily. MDH type 2 family.

It carries out the reaction (S)-malate + NAD(+) = oxaloacetate + NADH + H(+). Functionally, catalyzes the reversible oxidation of malate to oxaloacetate. The protein is Malate dehydrogenase of Frankia casuarinae (strain DSM 45818 / CECT 9043 / HFP020203 / CcI3).